Reading from the N-terminus, the 113-residue chain is MFNQVMLVGRLTKDPDLRYTSAGAAVAHVTLAVNRSFKNASGEIEADYVNCTLWRKTAENTALYCQKGSLVGVSGRIQTRSYENEEGVNVYVTEVLADTVRFMDPKPREKAAD.

In terms of domain architecture, SSB spans 1–104; sequence MFNQVMLVGR…VLADTVRFMD (104 aa). The residue at position 82 (Tyr82) is a Phosphotyrosine.

In terms of assembly, homotetramer. Post-translationally, phosphorylated by YwqD, which increases ssDNA affinity; dephosphorylated by YwqE.

It localises to the cytoplasm. Functionally, not essential for replication of the chromosome, but is required for optimal competence. Binds ssDNA, binding is facilitated by DprA, acts as an accessory factor for homologous DNA strand exchange. The sequence is that of Single-stranded DNA-binding protein B (ssbB) from Bacillus subtilis (strain 168).